The chain runs to 308 residues: Ribosomal RNA large subunit methyltransferase F (308 aa).

The disordered stretch occupies residues 190–212 (DSAASARAGSERKRRNLGQDKND).

The protein belongs to the methyltransferase superfamily. METTL16/RlmF family.

The protein resides in the cytoplasm. It carries out the reaction adenosine(1618) in 23S rRNA + S-adenosyl-L-methionine = N(6)-methyladenosine(1618) in 23S rRNA + S-adenosyl-L-homocysteine + H(+). Functionally, specifically methylates the adenine in position 1618 of 23S rRNA. The polypeptide is Ribosomal RNA large subunit methyltransferase F (Citrobacter koseri (strain ATCC BAA-895 / CDC 4225-83 / SGSC4696)).